A 103-amino-acid chain; its full sequence is Large ribosomal subunit protein bL21 (103 aa).

This sequence belongs to the bacterial ribosomal protein bL21 family. As to quaternary structure, part of the 50S ribosomal subunit. Contacts protein L20.

Functionally, this protein binds to 23S rRNA in the presence of protein L20. The polypeptide is Large ribosomal subunit protein bL21 (Treponema denticola (strain ATCC 35405 / DSM 14222 / CIP 103919 / JCM 8153 / KCTC 15104)).